Consider the following 347-residue polypeptide: tRNA N6-adenosine threonylcarbamoyltransferase (347 aa).

Residues His110 and His114 each coordinate Fe cation. Substrate contacts are provided by residues 133 to 137 (VVSGG), Asp168, Gly181, Asp185, and Asn277. Residue Asp305 coordinates Fe cation.

It belongs to the KAE1 / TsaD family. The cofactor is Fe(2+).

It localises to the cytoplasm. It catalyses the reaction L-threonylcarbamoyladenylate + adenosine(37) in tRNA = N(6)-L-threonylcarbamoyladenosine(37) in tRNA + AMP + H(+). Required for the formation of a threonylcarbamoyl group on adenosine at position 37 (t(6)A37) in tRNAs that read codons beginning with adenine. Is involved in the transfer of the threonylcarbamoyl moiety of threonylcarbamoyl-AMP (TC-AMP) to the N6 group of A37, together with TsaE and TsaB. TsaD likely plays a direct catalytic role in this reaction. The sequence is that of tRNA N6-adenosine threonylcarbamoyltransferase from Kineococcus radiotolerans (strain ATCC BAA-149 / DSM 14245 / SRS30216).